We begin with the raw amino-acid sequence, 1412 residues long: DNA-directed RNA polymerase subunit beta' (1412 aa).

Positions 70, 72, 85, and 88 each coordinate Zn(2+). 3 residues coordinate Mg(2+): Asp-460, Asp-462, and Asp-464. Cys-819, Cys-893, Cys-900, and Cys-903 together coordinate Zn(2+). Residues 1391-1412 form a disordered region; the sequence is AEESFEFGTPETPAAEQQHSGE.

Belongs to the RNA polymerase beta' chain family. As to quaternary structure, the RNAP catalytic core consists of 2 alpha, 1 beta, 1 beta' and 1 omega subunit. When a sigma factor is associated with the core the holoenzyme is formed, which can initiate transcription. The cofactor is Mg(2+). Zn(2+) is required as a cofactor.

The enzyme catalyses RNA(n) + a ribonucleoside 5'-triphosphate = RNA(n+1) + diphosphate. DNA-dependent RNA polymerase catalyzes the transcription of DNA into RNA using the four ribonucleoside triphosphates as substrates. The sequence is that of DNA-directed RNA polymerase subunit beta' from Paraburkholderia phytofirmans (strain DSM 17436 / LMG 22146 / PsJN) (Burkholderia phytofirmans).